The primary structure comprises 392 residues: GTPase Obg (392 aa).

The 159-residue stretch at 1–159 folds into the Obg domain; that stretch reads MKFVDEATIL…RDLQLELMLL (159 aa). The segment at 127 to 148 is disordered; the sequence is NTRFKSSVNRTPRQKTMGTPGD. Positions 129–143 are enriched in polar residues; sequence RFKSSVNRTPRQKTM. Residues 160-333 form the OBG-type G domain; it reads ADVGMLGMPN…LCWDVMTFII (174 aa). Residues 166 to 173, 191 to 195, 213 to 216, 283 to 286, and 314 to 316 contribute to the GTP site; these read GMPNAGKS, FTTLV, DIPG, NKID, and SAA. Positions 173 and 193 each coordinate Mg(2+). Residues 362 to 386 are compositionally biased toward acidic residues; that stretch reads EEAEAEAEDDEDWDDDWDEDDEEGV. Residues 362–392 are disordered; sequence EEAEAEAEDDEDWDDDWDEDDEEGVEFIYKR.

Belongs to the TRAFAC class OBG-HflX-like GTPase superfamily. OBG GTPase family. Monomer. It depends on Mg(2+) as a cofactor.

It is found in the cytoplasm. Its function is as follows. An essential GTPase which binds GTP, GDP and possibly (p)ppGpp with moderate affinity, with high nucleotide exchange rates and a fairly low GTP hydrolysis rate. Plays a role in control of the cell cycle, stress response, ribosome biogenesis and in those bacteria that undergo differentiation, in morphogenesis control. The sequence is that of GTPase Obg from Klebsiella pneumoniae subsp. pneumoniae (strain ATCC 700721 / MGH 78578).